A 461-amino-acid polypeptide reads, in one-letter code: Tumor necrosis factor receptor superfamily member 1A (461 aa).

The first 29 residues, 1 to 29, serve as a signal peptide directing secretion; sequence MGLSTVPGLLLPLVLRALLVDVYPAGVHG. At 30–210 the chain is on the extracellular side; sequence LVLHPGDREK…RNDFQDTGTT (181 aa). TNFR-Cys repeat units follow at residues 43–82, 83–125, 126–166, and 167–195; these read LCPQGKYSHPQNRSICCTKCHKGTYLHNDCLGPGLDTDCR, ECDN…DTVC, GCRK…DTIC, and NCHSGFFLRDKECVSCVNCKNADCKNLCP. Disulfide bonds link C44–C58, C59–C72, C62–C81, C84–C99, C102–C117, C105–C125, and C127–C143. N54 is a glycosylation site (N-linked (GlcNAc...) asparagine). Residue N86 is glycosylated (N-linked (GlcNAc...) asparagine). N145 and N151 each carry an N-linked (GlcNAc...) asparagine glycan. Disulfide bonds link C146-C158, C149-C166, C168-C179, C182-C194, and C185-C190. A helical membrane pass occupies residues 211–233; the sequence is VLLPLVIFFGLCLAFFLFVGLAC. Topologically, residues 234–461 are cytoplasmic; it reads RYQRWKPKLY…RLAPAPHLLR (228 aa). Residues 340–350 are N-SMase activation domain (NSD); it reads LPKWGGSAHSA. The 86-residue stretch at 362–447 folds into the Death domain; sequence PATLYAVVDG…GCLEDIEEAL (86 aa).

In terms of assembly, binding of TNF to the extracellular domain leads to homotrimerization. The aggregated death domains provide a novel molecular interface that interacts specifically with the death domain of TRADD. Various TRADD-interacting proteins such as TRAFS, RIPK1 and possibly FADD, are recruited to the complex by their association with TRADD. This complex activates at least two distinct signaling cascades, apoptosis and NF-kappa-B signaling. Interacts with BAG4, BABAM2, FEM1B, GRB2, SQSTM1 and TRPC4AP. Interacts with DAB2IP. Interacts directly with NOL3 (via CARD domain); inhibits TNF-signaling pathway. Interacts with SH3RF2, TRADD and RIPK1. SH3RF2 facilitates the recruitment of RIPK1 and TRADD to TNFRSF1A in a TNF-alpha-dependent process. Interacts with PGLYRP1; this interaction is important for cell death induction. Interacts (via death domain) with MADD (via death domain).

Its subcellular location is the cell membrane. The protein localises to the golgi apparatus membrane. In terms of biological role, receptor for TNFSF2/TNF-alpha and homotrimeric TNFSF1/lymphotoxin-alpha. The adapter molecule FADD recruits caspase-8 to the activated receptor. The resulting death-inducing signaling complex (DISC) performs caspase-8 proteolytic activation which initiates the subsequent cascade of caspases (aspartate-specific cysteine proteases) mediating apoptosis. The sequence is that of Tumor necrosis factor receptor superfamily member 1A (TNFRSF1A) from Sus scrofa (Pig).